We begin with the raw amino-acid sequence, 1069 residues long: MDDSDDEYSRSHGETLTFVDPEDDGVSIGNTQDSQFAYEQFSVPTQSSQATDLLPGGTDGTTNDLPFHDVEDDESDSEKSLTEEQHEQKLPEHACRYCGISDPLCVAKCTVCRKWFCNSNDGTSGGHIVHHMVRSQHKEAYTHKDSPCGDTQLECYRCGSKNVFNLGFIPGKKDQVVVIICRTPCASIAFQNDDNWSPEDWKSVIAEKQLLSWIVNVPSEEQVARARKITATQAVRMEELWRDHPEATVDDLNKPGLDREPDHVQLRYVDAHHYSKVFRPLVAIEAEYDRRVKESASQAVGTVRWEQGLRQSVLAFFHLPQFADGVMKLAKGDELRLKHSQTVDGSEWTKIGSVFKIPDNHGDEVGIEIRGAVDKSVMESRIMFTVDVVWNATTFERQYKALAALLNDSKAISPYLYQKLLGHPAEEMMLKFDLPRRLSVAGLPELNSSQMQAVKQVLTRPLSLIQGPPGTGKTVVSATIVYHLVQKTEGNVLVCSPSNIAVDHLAEKIHKTGLKVVRLCARSREHSETTVPYLTLQHQLKVMGGAELQKLIQLKDEAGELEFKDDLRYMQLKRVKEHELLAAADVICCTCSSAADARLSKIRTRTVLIDESTQATEPEILVSIMRGVRQLVLVGDHCQLGPVVICKKAAIAGLSQSLFERLVLLGIRPFRLQVQYRMHPVLSEFPSNVFYDGSLQNGVTENDRHMTGVDWHWPKPNKPAFFWHCSGSEELSASGTSFLNRTEAANVEKLVSKLIKAGVQPHQIGVITSYEGQRSFIVNYMHTQGTLNSKLYENVEIASVDAFQGREKDYIIVTCVRSNDILGIGFLSDPRRLNVAITRAKYGLVLVGNAKVLARHDLWHELINHYKSKEMLYEGPINALKPLNLALPKATIRTKNNIAGNANRFGIKRMQYTFNEYKSNDPSQPRLPPTYSNSQNLLSMSKLAQTFNKNVPIPAHMMDPNVYAAARNQKDRRRGDQRRPPPQAEAAMDLSQGMMSQQSQQYPPQGASSQSQYLLDGASSLSGWSQSQTTTTTTRHHHHRQNRNSQQQMSQDMDDIQQKMDDLLFSQDC.

A disordered region spans residues 1–86 (MDDSDDEYSR…SEKSLTEEQH (86 aa)). The span at 28–50 (IGNTQDSQFAYEQFSVPTQSSQA) shows a compositional bias: polar residues. Positions 51-65 (TDLLPGGTDGTTNDL) are enriched in low complexity. The span at 77 to 86 (SEKSLTEEQH) shows a compositional bias: basic and acidic residues. A Upf1 CH-rich domain is found at 87–244 (EQKLPEHACR…VRMEELWRDH (158 aa)). 12 residues coordinate Zn(2+): cysteine 95, cysteine 98, cysteine 109, cysteine 112, cysteine 117, histidine 127, histidine 131, histidine 137, cysteine 155, cysteine 158, cysteine 181, and cysteine 185. Residues 95-127 (CRYCGISDPLCVAKCTVCRKWFCNSNDGTSGGH) are C3H. The segment at 109 to 137 (CTVCRKWFCNSNDGTSGGHIVHHMVRSQH) is CC/SHH/C. The tract at residues 155-185 (CYRCGSKNVFNLGFIPGKKDQVVVIICRTPC) is C4. ATP is bound by residues glutamine 450, 467–474 (GPPGTGKT), glutamine 639, tyrosine 676, and glutamate 807. The disordered stretch occupies residues 966 to 1069 (ARNQKDRRRG…MDDLLFSQDC (104 aa)). Low complexity predominate over residues 991–1013 (SQGMMSQQSQQYPPQGASSQSQY).

Belongs to the DNA2/NAM7 helicase family. Phosphorylated probably by smg-1. Smg-3 and smg-4 are required for phosphorylation.

It is found in the cytoplasm. The enzyme catalyses ATP + H2O = ADP + phosphate + H(+). Its function is as follows. RNA-dependent helicase required for nonsense-mediated decay (NMD) of aberrant mRNAs containing premature stop codons and modulates the expression level of normal mRNAs. Is recruited to mRNAs upon translation termination and undergoes a cycle of phosphorylation and dephosphorylation; its phosphorylation appears to be a key step in NMD. The formation of an smg-2-3-4 surveillance complex is believed to activate NMD. The sequence is that of Regulator of nonsense transcripts 1 (smg-2) from Caenorhabditis elegans.